Reading from the N-terminus, the 62-residue chain is DNA-directed RNA polymerase subunit Rpo10 (62 aa).

The Zn(2+) site is built by cysteine 6, cysteine 9, cysteine 43, and cysteine 44.

Belongs to the archaeal Rpo10/eukaryotic RPB10 RNA polymerase subunit family. In terms of assembly, part of the RNA polymerase complex. Requires Zn(2+) as cofactor.

The protein resides in the cytoplasm. The catalysed reaction is RNA(n) + a ribonucleoside 5'-triphosphate = RNA(n+1) + diphosphate. Its function is as follows. DNA-dependent RNA polymerase (RNAP) catalyzes the transcription of DNA into RNA using the four ribonucleoside triphosphates as substrates. This Methanosarcina mazei (strain ATCC BAA-159 / DSM 3647 / Goe1 / Go1 / JCM 11833 / OCM 88) (Methanosarcina frisia) protein is DNA-directed RNA polymerase subunit Rpo10.